Reading from the N-terminus, the 626-residue chain is Chaperone protein HtpG (626 aa).

Residues 1–338 (MTANKNQKKT…SNDLPLNVSR (338 aa)) form an a; substrate-binding region. Residues 339 to 553 (EILQDHKLVY…SNEMSTQMAK (215 aa)) are b. The tract at residues 554–626 (LFSAAGQTVP…ARINDLLINN (73 aa)) is c.

Belongs to the heat shock protein 90 family. As to quaternary structure, homodimer.

The protein resides in the cytoplasm. Its function is as follows. Molecular chaperone. Has ATPase activity. This is Chaperone protein HtpG from Buchnera aphidicola subsp. Baizongia pistaciae (strain Bp).